Reading from the N-terminus, the 271-residue chain is MIGKLSLLLVCVAVASGNPAAGKPWHWKSPKPLVDPRIHVNATPRIVGGVEATPHSWPHQAALFIDDMYFCGGSLISSEWVLTAAHCMDGAGFVEVVLGAHNIRQNEASQVSITSTDFFTHENWNSWLLTNDIALIKLPSPVSLNSNIKTVKLPSSDVAVGTTVTPTGWGRPLDSAGGISDVLRQVDVPIMTNDDCDAVYGIVGNGVVCIDSEGGKGTCNGDSGGPLNLNGMTYGITSFGSSAGCEVGYPDAFTRVYYYLDWIEQKTGVTP.

The N-terminal stretch at 1-15 (MIGKLSLLLVCVAVA) is a signal peptide. A propeptide spans 16-45 (SGNPAAGKPWHWKSPKPLVDPRIHVNATPR) (activation peptide). Residues 46-268 (IVGGVEATPH…YLDWIEQKTG (223 aa)) form the Peptidase S1 domain. An intrachain disulfide couples Cys71 to Cys87. Active-site charge relay system residues include His86 and Asp132. 2 disulfide bridges follow: Cys196–Cys209 and Cys219–Cys245. Ser223 (charge relay system) is an active-site residue.

Belongs to the peptidase S1 family.

The protein localises to the secreted. It localises to the extracellular space. It catalyses the reaction Preferential cleavage: Tyr-|-Xaa, Trp-|-Xaa, Phe-|-Xaa, Leu-|-Xaa.. Serine protease with chymotryptic and collagenolytic activities. The sequence is that of Chymotrypsin BII from Penaeus vannamei (Whiteleg shrimp).